Consider the following 87-residue polypeptide: MSIFRFFSKQTSAPTARERLQVLLAHERASVGQSDLVAVLREEILAVIAKHVQVDRDKVNVTMERGEHVTTLEVDIEIPMKAGVRAA.

Belongs to the MinE family.

Prevents the cell division inhibition by proteins MinC and MinD at internal division sites while permitting inhibition at polar sites. This ensures cell division at the proper site by restricting the formation of a division septum at the midpoint of the long axis of the cell. The chain is Cell division topological specificity factor from Rhizobium meliloti (strain 1021) (Ensifer meliloti).